The following is a 203-amino-acid chain: Outer-membrane lipoprotein carrier protein (203 aa).

An N-terminal signal peptide occupies residues 1–21 (MKKLAITCALLSGMVVSQVWA). Residues 184-203 (DASKFTFTPPKGVTVDDQRK) are disordered.

This sequence belongs to the LolA family. As to quaternary structure, monomer.

Its subcellular location is the periplasm. Participates in the translocation of lipoproteins from the inner membrane to the outer membrane. Only forms a complex with a lipoprotein if the residue after the N-terminal Cys is not an aspartate (The Asp acts as a targeting signal to indicate that the lipoprotein should stay in the inner membrane). This is Outer-membrane lipoprotein carrier protein from Klebsiella pneumoniae (strain 342).